The primary structure comprises 775 residues: E3 ubiquitin-protein ligase ICP0 (775 aa).

Residues 1 to 112 (MEPRPGASTR…PPREDGGSDE (112 aa)) form a disordered region. 2 stretches are compositionally biased toward basic and acidic residues: residues 10 to 21 (RRPEGRPQREPA) and 45 to 57 (VGGR…HDDD). The segment covering 58–69 (SASEADSTDTEL) has biased composition (acidic residues). A Phosphothreonine; by host; by CK1 modification is found at Thr67. The segment at 116-157 (CAVCTDEIAPHLRCDTFPCMHRFCIPCMKTWMQLRNTCPLCN) adopts an RING-type zinc-finger fold. The segment at 221–636 (RALSPTHPEP…HAETSGAVPA (416 aa)) is disordered. Residues 231 to 243 (TTDEDDDDLDDAD) are compositionally biased toward acidic residues. Residues 258–284 (RRGAAAPPVTGGASHAAPQPAAARTAP) are compositionally biased toward low complexity. Over residues 293 to 302 (GSSNTNTTTN) the composition is skewed to polar residues. Positions 310 to 321 (RQSRAAAPRGAS) are enriched in low complexity. A compositionally biased stretch (gly residues) spans 322-331 (GPSGGVGVGV). The segment covering 369 to 390 (PASPHRPPAAPMPGSAPRPGPP) has biased composition (pro residues). Over residues 391–409 (ASAAASGPARPRAAVAPCV) the composition is skewed to low complexity. The span at 410–421 (RAPPPGPGPRAP) shows a compositional bias: pro residues. Residues 422–431 (APGAEPAARP) are compositionally biased toward low complexity. The span at 439 to 453 (QSHSSLAQAANQEQS) shows a compositional bias: polar residues. Residues 464 to 476 (GSGGPGVEGGHGP) show a composition bias toward gly residues. Over residues 477–493 (SRGAAPSGAAPLPSAAS) the composition is skewed to low complexity. The segment covering 509-519 (GQENPSPQSTR) has biased composition (polar residues). A compositionally biased stretch (gly residues) spans 539–549 (GPGGRGQGGPG). The segment covering 550–592 (TPLTSSAASASSSSASSSSAPTPAGAASSAAGAASSSASASSG) has biased composition (low complexity). Residues 617-626 (GPRKCARKTR) show a composition bias toward basic residues.

It belongs to the simplexviruses ICp0 family. Interacts directly with human RCOR1/CoREST protein, leading to the disruption of the human BHC corepressor complex. Interacts with human CENPA, leading to its degradation. Interacts with human USP7; this interaction modulates ICP0 stability. Interacts with human CDC34. Interacts (when phosphorylated) with human RNF8 (via FHA domain). Interacts with human TRIM27. Interacts with human ZBP1. Interacts with host MORC3; this interaction promotes the degradation of host MORC3. In terms of processing, phosphorylated at Thr-67, leading to promote interaction with host RNF8. Phosphorylated by host CHEK2; leading to increased SUMO-targeted ubiquitin ligase activity of ICP0. Post-translationally, auto-ubiquitinated. Deubiquitinated by host USP7; leading to stabilize it.

The protein localises to the host cytoplasm. The protein resides in the host nucleus. The enzyme catalyses S-ubiquitinyl-[E2 ubiquitin-conjugating enzyme]-L-cysteine + [acceptor protein]-L-lysine = [E2 ubiquitin-conjugating enzyme]-L-cysteine + N(6)-ubiquitinyl-[acceptor protein]-L-lysine.. Its function is as follows. SUMO-targeted ubiquitin ligase that plays an essential role in nuclear antiviral defense evasion triggered by dsDNA viruses. Acts during the initial stages of lytic infection and the reactivation of latent viral genome. Prevents the antiviral effect of nuclear bodies by degrading host PML, SP100 and MORC3. Prevents antiviral response to viral DNA induced by IFI16 by degrading it. Additionally, inhibits host IRF3 nuclear signaling to prevent interferon production by the infected cells. Interestingly, the E3 ubiquitin ligase activity associated with the RING finger domain does not seem to be directly required to inhibit the activation of IRF3 but instead plays a critical role in modulating the cellular localization of ICP0. Upon reactivation of latent genome, suppresses the silencing of viral DNA by dissociating either HDAC1 or HDAC2 from the HDAC-RCOR1-REST-KDM1A complex localized at the ND10 structures and causes their dispersal. Two cellular histone ubiquitin ligases RNF8 and RNF168 are also targeted by ICP0 for degradation, leading to a loss of ubiquitinated forms of H2A, a relief of transcriptional repression, and the activation of latent viral genomes. Enhances the localization of host CCND3 to ND10 bodies that serve as precursors of replication compartments to enable efficient viral replication. Like many RING-finger E3 ubiquitin ligases, ICP0 can induce its own ubiquitination, an activity that promotes its instability due to its targeting to the 26S proteasome for degradation. ICP0 restricts this process by recruiting the cellular ubiquitin-specific protease USP7 that cleaves the anchored ubiquitin chains from ICP0, thereby promoting its stabilization. This chain is E3 ubiquitin-protein ligase ICP0 (ICP0), found in Homo sapiens (Human).